The chain runs to 233 residues: Ribonuclease 3 (233 aa).

Positions Gln6–Gly135 constitute an RNase III domain. Residue Glu48 participates in Mg(2+) binding. Asp52 is a catalytic residue. Residues Asp121 and Glu124 each coordinate Mg(2+). Glu124 is an active-site residue. The DRBM domain maps to Asp161 to Asn230. Residues Ile205–Lys233 form a disordered region.

It belongs to the ribonuclease III family. In terms of assembly, homodimer. The cofactor is Mg(2+).

It is found in the cytoplasm. It carries out the reaction Endonucleolytic cleavage to 5'-phosphomonoester.. Digests double-stranded RNA. Involved in the processing of primary rRNA transcript to yield the immediate precursors to the large and small rRNAs (23S and 16S). Processes some mRNAs, and tRNAs when they are encoded in the rRNA operon. Processes pre-crRNA and tracrRNA of type II CRISPR loci if present in the organism. This chain is Ribonuclease 3, found in Limosilactobacillus reuteri (strain DSM 20016) (Lactobacillus reuteri).